The primary structure comprises 502 residues: Maturase K (502 aa).

Belongs to the intron maturase 2 family. MatK subfamily.

The protein localises to the plastid. It is found in the chloroplast. Usually encoded in the trnK tRNA gene intron. Probably assists in splicing its own and other chloroplast group II introns. This Sisymbrium irio (London rocket) protein is Maturase K.